The chain runs to 384 residues: 8-amino-7-oxononanoate synthase (384 aa).

Arginine 21 lines the substrate pocket. 108 to 109 (GF) is a pyridoxal 5'-phosphate binding site. Histidine 133 provides a ligand contact to substrate. The pyridoxal 5'-phosphate site is built by serine 179, histidine 207, and threonine 233. Residue lysine 236 is modified to N6-(pyridoxal phosphate)lysine. Residue threonine 352 participates in substrate binding.

It belongs to the class-II pyridoxal-phosphate-dependent aminotransferase family. BioF subfamily. Homodimer. The cofactor is pyridoxal 5'-phosphate.

The catalysed reaction is 6-carboxyhexanoyl-[ACP] + L-alanine + H(+) = (8S)-8-amino-7-oxononanoate + holo-[ACP] + CO2. It functions in the pathway cofactor biosynthesis; biotin biosynthesis. In terms of biological role, catalyzes the decarboxylative condensation of pimeloyl-[acyl-carrier protein] and L-alanine to produce 8-amino-7-oxononanoate (AON), [acyl-carrier protein], and carbon dioxide. This chain is 8-amino-7-oxononanoate synthase, found in Escherichia coli O17:K52:H18 (strain UMN026 / ExPEC).